A 379-amino-acid chain; its full sequence is Leukocyte elastase inhibitor (379 aa).

Met1 is subject to N-acetylmethionine. Residues Lys137 and Lys177 each carry the N6-acetyllysine modification. The tract at residues 351–379 (NFNADHPFIFFIRHNPSANILFLGRFSSP) is CARD-binding motif (CBM).

The protein belongs to the serpin family. Ov-serpin subfamily. As to quaternary structure, monomer. Interacts (via C-terminus) with CASP1; CASP4 (via CARD domain) and CASP5; these interactions regulate the activity of inflammatory caspases. Interacts with PRTN3. Interacts with GZMH. Interacts with TMSB4. In terms of processing, the N-terminus is blocked.

It localises to the secreted. The protein localises to the cytoplasm. It is found in the cytolytic granule. The protein resides in the early endosome. Functionally, neutrophil serine protease inhibitor that plays an essential role in the regulation of the innate immune response, inflammation and cellular homeostasis. Acts primarily to protect the cell from proteases released in the cytoplasm during stress or infection. These proteases are important in killing microbes but when released from granules, these potent enzymes also destroy host proteins and contribute to mortality. Regulates the activity of the neutrophil proteases elastase, cathepsin G, proteinase-3, chymase, chymotrypsin, and kallikrein-3. Also acts as a potent intracellular inhibitor of GZMH by directly blocking its proteolytic activity. During inflammation, limits the activity of inflammatory caspases CASP1, CASP4 and CASP5 by suppressing their caspase-recruitment domain (CARD) oligomerization and enzymatic activation. When secreted, promotes the proliferation of beta-cells via its protease inhibitory function. The chain is Leukocyte elastase inhibitor (SERPINB1) from Equus caballus (Horse).